The chain runs to 207 residues: Nucleoplasmin-2 (207 aa).

Polar residues predominate over residues 1 to 15 (MSRHSTSSVTETTAK). Disordered stretches follow at residues 1-20 (MSRH…MLWG) and 121-207 (DLTW…VTKK). The segment covering 123-147 (TWEDDEEEEEEEEEEDEDEDADISL) has biased composition (acidic residues). The tract at residues 129 to 152 (EEEEEEEEEDEDEDADISLEEIPV) is acidic tract A2. Residues 165-180 (SIAKKKKVEKEEDETV) carry the Bipartite nuclear localization signal motif. Positions 198–207 (PRAKKPVTKK) are enriched in basic residues.

It belongs to the nucleoplasmin family. Homopentamer, when bound to H2A-H2B dimers only. Homodecamer of two stacked pentamers, when bound to H2A-H2B dimers and H3-H4 tetramers simultaneously. As to expression, ovary specific.

It localises to the nucleus. Core histones chaperone involved in chromatin reprogramming, specially during fertilization and early embryonic development. Probably involved in sperm DNA decondensation during fertilization. In Mus musculus (Mouse), this protein is Nucleoplasmin-2 (Npm2).